Consider the following 205-residue polypeptide: Urease accessory protein UreE (205 aa).

Over residues 171–192 the composition is skewed to basic and acidic residues; sequence HHGHSHSHDHDHDHDHDHDHQH. A disordered region spans residues 171–205; that stretch reads HHGHSHSHDHDHDHDHDHDHQHGPCCSHGHHHGHR.

Belongs to the UreE family.

The protein localises to the cytoplasm. Involved in urease metallocenter assembly. Binds nickel. Probably functions as a nickel donor during metallocenter assembly. This chain is Urease accessory protein UreE, found in Burkholderia pseudomallei (strain K96243).